Here is an 83-residue protein sequence, read N- to C-terminus: Probable insulin-like peptide alpha-type 2 (83 aa).

A signal peptide spans 1–21; it reads MHTTTILICFFIFLVQVSTMD. Cystine bridges form between Cys32-Cys66, Cys44-Cys79, and Cys54-Cys80.

The protein belongs to the insulin family.

The protein localises to the secreted. This chain is Probable insulin-like peptide alpha-type 2 (ins-22), found in Caenorhabditis elegans.